A 602-amino-acid polypeptide reads, in one-letter code: NADH-quinone oxidoreductase subunit C/D (602 aa).

The interval 1–192 (MVNNMTDLTA…DPFELTKAKQ (192 aa)) is NADH dehydrogenase I subunit C. The interval 216-602 (DFMFLNLGPN…IDFVMSDVDR (387 aa)) is NADH dehydrogenase I subunit D.

The protein in the N-terminal section; belongs to the complex I 30 kDa subunit family. It in the C-terminal section; belongs to the complex I 49 kDa subunit family. In terms of assembly, NDH-1 is composed of 13 different subunits. Subunits NuoB, CD, E, F, and G constitute the peripheral sector of the complex.

It localises to the cell inner membrane. It catalyses the reaction a quinone + NADH + 5 H(+)(in) = a quinol + NAD(+) + 4 H(+)(out). In terms of biological role, NDH-1 shuttles electrons from NADH, via FMN and iron-sulfur (Fe-S) centers, to quinones in the respiratory chain. The immediate electron acceptor for the enzyme in this species is believed to be ubiquinone. Couples the redox reaction to proton translocation (for every two electrons transferred, four hydrogen ions are translocated across the cytoplasmic membrane), and thus conserves the redox energy in a proton gradient. This is NADH-quinone oxidoreductase subunit C/D from Klebsiella pneumoniae (strain 342).